Reading from the N-terminus, the 276-residue chain is F-box/LRR-repeat protein 20 (276 aa).

One can recognise an F-box domain in the interval 22 to 68; it reads AVINKKLPKELLLRIFSFLDVVTLCRCAQVSRAWNVLALDGSNWQRI. 8 LRR repeats span residues 74–100, 101–126, 127–152, 153–178, 179–204, 205–230, 231–256, and 257–276; these read QRDIEGRVVENISKRCGGFLRKLSLRG, CLGVGDNALRTFAQNCRNIEVLSLNG, CTKTTDATCTSLSKFCSKLRHLDLAS, CTSITNMSLKALSEGCPLLEQLNISW, CDQVTKDGIQALVRGCGGLKALFLKG, CTQLEDEALKYIGAHCPELVTLNLQT, CLQITDEGLITICRGCHKLQSLCASG, and CSNITDAILNALGQNCPRLR.

In terms of assembly, interacts with SKP1 and CUL1. As to expression, widely expressed, with highest expression in skeletal muscle, heart and brain.

Its subcellular location is the cytoplasm. Substrate-recognition component of the SCF (SKP1-CUL1-F-box protein)-type E3 ubiquitin ligase complex. Role in neural transmission. This chain is F-box/LRR-repeat protein 20 (Fbxl20), found in Rattus norvegicus (Rat).